Consider the following 574-residue polypeptide: Arginine--tRNA ligase (574 aa).

The 'HIGH' region motif lies at 121-131 (PNIAKEMHIGH).

Belongs to the class-I aminoacyl-tRNA synthetase family. As to quaternary structure, monomer.

Its subcellular location is the cytoplasm. The enzyme catalyses tRNA(Arg) + L-arginine + ATP = L-arginyl-tRNA(Arg) + AMP + diphosphate. The polypeptide is Arginine--tRNA ligase (Buchnera aphidicola subsp. Acyrthosiphon pisum (strain Tuc7)).